We begin with the raw amino-acid sequence, 93 residues long: Small ribosomal subunit protein uS15c (93 aa).

It belongs to the universal ribosomal protein uS15 family. In terms of assembly, part of the 30S ribosomal subunit.

The protein localises to the plastid. Its subcellular location is the chloroplast. In Jasminum nudiflorum (Winter jasmine), this protein is Small ribosomal subunit protein uS15c (rps15).